The chain runs to 183 residues: Threonylcarbamoyl-AMP synthase (183 aa).

One can recognise a YrdC-like domain in the interval 1 to 183; it reads MNREQIAEAL…LRTNQLFRQG (183 aa).

This sequence belongs to the SUA5 family. TsaC subfamily.

It is found in the cytoplasm. The enzyme catalyses L-threonine + hydrogencarbonate + ATP = L-threonylcarbamoyladenylate + diphosphate + H2O. Functionally, required for the formation of a threonylcarbamoyl group on adenosine at position 37 (t(6)A37) in tRNAs that read codons beginning with adenine. Catalyzes the conversion of L-threonine, HCO(3)(-)/CO(2) and ATP to give threonylcarbamoyl-AMP (TC-AMP) as the acyladenylate intermediate, with the release of diphosphate. The protein is Threonylcarbamoyl-AMP synthase of Haemophilus influenzae (strain 86-028NP).